We begin with the raw amino-acid sequence, 128 residues long: Fruiting body differentiation protein 16 (128 aa).

The N-terminal stretch at 1–19 is a signal peptide; the sequence is MLFSHIVFVALSVFGLVQA.

Its function is as follows. Plays a role in the regulation of fruiting body development. This chain is Fruiting body differentiation protein 16, found in Flammulina velutipes (Agaricus velutipes).